The following is a 215-amino-acid chain: Adenylate kinase (215 aa).

10-15 (GTGKGT) contacts ATP. The tract at residues 30–59 (STGDMLRESVVLKNKIGMIIKNIIEEGKLV) is NMP. AMP contacts are provided by residues threonine 31, arginine 36, 57–59 (KLV), 85–88 (GFPR), and glutamine 92. The interval 122 to 159 (GRRIHIQSGRIYHVKFKPPKIKDKDDLTGQTLITRKDD) is LID. ATP contacts are provided by residues arginine 123 and 132–133 (IY). Arginine 156 and arginine 167 together coordinate AMP. An ATP-binding site is contributed by leucine 200.

Belongs to the adenylate kinase family. As to quaternary structure, monomer.

The protein localises to the cytoplasm. It carries out the reaction AMP + ATP = 2 ADP. It functions in the pathway purine metabolism; AMP biosynthesis via salvage pathway; AMP from ADP: step 1/1. Catalyzes the reversible transfer of the terminal phosphate group between ATP and AMP. Plays an important role in cellular energy homeostasis and in adenine nucleotide metabolism. The protein is Adenylate kinase of Buchnera aphidicola subsp. Acyrthosiphon pisum (strain 5A).